Consider the following 589-residue polypeptide: Serine/threonine-protein kinase STE7 homolog (589 aa).

Over residues 1-18 the composition is skewed to basic and acidic residues; it reads MTRTTRIDTQEATKHKDL. Disordered stretches follow at residues 1–162 and 185–232; these read MTRT…DPDN and RQHY…PASS. Residues 24 to 33 show a composition bias toward low complexity; sequence PLSLSSNPNP. Over residues 57 to 69 the composition is skewed to polar residues; the sequence is VKSTSGSLRSSDM. Low complexity predominate over residues 92 to 121; it reads PTASSSATSTPTSNITGSSSASSIQFAQKS. 2 stretches are compositionally biased toward polar residues: residues 127-136 and 144-162; these read IVSQTLSRPS and SGYS…DPDN. Basic residues predominate over residues 185–203; the sequence is RQHYQNSHHHLPTTNRKRQ. Positions 206 to 220 are enriched in low complexity; that stretch reads ISSISPTKSSAASSP. The Protein kinase domain maps to 249 to 565; it reads LLTLKQLGSG…QLLEDKEHFF (317 aa). Residues 255 to 263 and lysine 278 contribute to the ATP site; that span reads LGSGNSGSV. The active-site Proton acceptor is the aspartate 374. Residue serine 402 is modified to Phosphoserine. Threonine 408 carries the post-translational modification Phosphothreonine. Residues 473–499 are disordered; it reads IAAERNGQNSPSRSRKNKQKGNGYNSY.

It belongs to the protein kinase superfamily. STE Ser/Thr protein kinase family. MAP kinase kinase subfamily.

The catalysed reaction is L-seryl-[protein] + ATP = O-phospho-L-seryl-[protein] + ADP + H(+). It catalyses the reaction L-threonyl-[protein] + ATP = O-phospho-L-threonyl-[protein] + ADP + H(+). The enzyme catalyses L-tyrosyl-[protein] + ATP = O-phospho-L-tyrosyl-[protein] + ADP + H(+). The chain is Serine/threonine-protein kinase STE7 homolog (HST7) from Candida albicans (strain WO-1) (Yeast).